Here is a 554-residue protein sequence, read N- to C-terminus: Cytochrome c oxidase subunit 1-alpha (554 aa).

Residues 26-56 form a helical membrane-spanning segment; that stretch reads KDIGVLYLFTAGLAGLISVTLTVYMRMELQH. A disulfide bridge links C63 with C77. Transmembrane regions (helical) follow at residues 81–118, 127–148, 175–203, 215–248, 260–295, and 301–319; these read AHLWNVVVTYHGILMMFFVVIPALFGGFGNYFMPLHIG, LNNLSYWLYVCGVSLAIASLLS, AMDLAIFAVHVSGATSILGAINIITTFLN, PLFAWAVFITAWMILLSLPVLAGGITMLLMDRNF, DPVLYQHILWFFGHPEVYMLILPGFGIISHVISTFA, and GYLPMVLAMAAIAFLGFIV. H91 serves as a coordination point for Fe(II)-heme a. Positions 273 and 277 each coordinate Cu cation. Residues 273–277 constitute a cross-link (1'-histidyl-3'-tyrosine (His-Tyr)); sequence HPEVY. Cu cation contacts are provided by H322 and H323. Helical transmembrane passes span 331–359, 367–390, 399–425, 436–463, and 478–508; these read LTQQTYFQMATMTIAVPTGIKVFSWIATM, KTPMLWALAFLFTVGGVTGVVIAQ, DTYYIVAHFHYVMSLGALFAIFAGTYY, PEWAGQLHFWMMFIGSNLIFFPQHFLGR, and SYWNNISSIGAYISFASFLFFIGIVFYTLFA. A heme a3-binding site is contributed by H406. A Fe(II)-heme a-binding site is contributed by H408.

The protein belongs to the heme-copper respiratory oxidase family. The cofactor is Cu(2+). Heme serves as cofactor.

The protein localises to the cell inner membrane. It catalyses the reaction 4 Fe(II)-[cytochrome c] + O2 + 8 H(+)(in) = 4 Fe(III)-[cytochrome c] + 2 H2O + 4 H(+)(out). It functions in the pathway energy metabolism; oxidative phosphorylation. In terms of biological role, subunit I and II form the functional core of the enzyme complex. Electrons originating in cytochrome c are transferred via heme a and Cu(A) to the binuclear center formed by heme a3 and Cu(B). This cytochrome c oxidase shows proton pump activity across the membrane in addition to the electron transfer. The polypeptide is Cytochrome c oxidase subunit 1-alpha (ctaDI) (Paracoccus denitrificans).